Reading from the N-terminus, the 318-residue chain is NADH-ubiquinone oxidoreductase chain 1 (318 aa).

8 helical membrane passes run Phe-3–Leu-23, Leu-68–Pro-88, Ile-102–Ala-122, Leu-146–Ile-166, His-171–Ala-191, Leu-222–Phe-242, Glu-253–Ile-273, and Leu-294–Ile-314.

This sequence belongs to the complex I subunit 1 family.

It is found in the mitochondrion inner membrane. The catalysed reaction is a ubiquinone + NADH + 5 H(+)(in) = a ubiquinol + NAD(+) + 4 H(+)(out). In terms of biological role, core subunit of the mitochondrial membrane respiratory chain NADH dehydrogenase (Complex I) that is believed to belong to the minimal assembly required for catalysis. Complex I functions in the transfer of electrons from NADH to the respiratory chain. The immediate electron acceptor for the enzyme is believed to be ubiquinone. The chain is NADH-ubiquinone oxidoreductase chain 1 (MT-ND1) from Nyctalus plancyi velutinus (Fine-haired noctule).